A 310-amino-acid chain; its full sequence is MGKTKNTSLDAVVTDFILLGLSHPPNLRSLLFLVFFIIYILTQLGNLLILLTMWADPKLCARPMYILLGVLSFLDMWLSSVTVPLLILDFTPSIKAIPFGGCVAQLYFFHFLGSTQCFLYTLMAYDRYLAICQPLRYPVLMNGRLCTVLVAGAWVAGSMHGSIQATLTFRLPYCGPNQVDYFICDIPAVLRLACADTTVNELVTFVDVGVVAASCFMLILLSYANIVNAILKIRTTDGRRRAFSTCGSHLIVVTVYYVPCIFIYLRAGSKDPLDGAAAVFYTVVTPLLNPLIYTLRNQEVKSALKRITAG.

At 1-29 the chain is on the extracellular side; it reads MGKTKNTSLDAVVTDFILLGLSHPPNLRS. N-linked (GlcNAc...) asparagine glycosylation occurs at asparagine 6. Residues 30-50 form a helical membrane-spanning segment; it reads LLFLVFFIIYILTQLGNLLIL. Topologically, residues 51-58 are cytoplasmic; it reads LTMWADPK. A helical membrane pass occupies residues 59 to 80; the sequence is LCARPMYILLGVLSFLDMWLSS. The Extracellular segment spans residues 81 to 104; sequence VTVPLLILDFTPSIKAIPFGGCVA. An intrachain disulfide couples cysteine 102 to cysteine 194. A helical transmembrane segment spans residues 105–125; the sequence is QLYFFHFLGSTQCFLYTLMAY. The Cytoplasmic portion of the chain corresponds to 126–144; it reads DRYLAICQPLRYPVLMNGR. Residues 145–165 form a helical membrane-spanning segment; the sequence is LCTVLVAGAWVAGSMHGSIQA. At 166-202 the chain is on the extracellular side; the sequence is TLTFRLPYCGPNQVDYFICDIPAVLRLACADTTVNEL. Residues 203–222 traverse the membrane as a helical segment; sequence VTFVDVGVVAASCFMLILLS. At 223–242 the chain is on the cytoplasmic side; that stretch reads YANIVNAILKIRTTDGRRRA. A helical membrane pass occupies residues 243–263; sequence FSTCGSHLIVVTVYYVPCIFI. Residues 264–274 lie on the Extracellular side of the membrane; that stretch reads YLRAGSKDPLD. Residues 275–295 form a helical membrane-spanning segment; it reads GAAAVFYTVVTPLLNPLIYTL. Topologically, residues 296 to 310 are cytoplasmic; sequence RNQEVKSALKRITAG.

Belongs to the G-protein coupled receptor 1 family.

Its subcellular location is the cell membrane. Its function is as follows. Odorant receptor. The sequence is that of Olfactory receptor 10G2 (OR10G2) from Homo sapiens (Human).